A 341-amino-acid polypeptide reads, in one-letter code: DNA fragmentation factor subunit beta (341 aa).

Residues 7–83 form the CIDE-N domain; that stretch reads KPKTFKLRSL…LLTAGQTWQG (77 aa).

As to quaternary structure, heterodimer of DFFA and DFFB. Interacts with H1-1.

Its subcellular location is the cytoplasm. It is found in the nucleus. Its activity is regulated as follows. Inhibited by DFFA (DFF45). Interacts with HIST1H1A. Nuclease that induces DNA fragmentation and chromatin condensation during apoptosis. Degrades naked DNA and induces apoptotic morphology. The chain is DNA fragmentation factor subunit beta (DFFB) from Bos taurus (Bovine).